The sequence spans 782 residues: Shutoff protein (782 aa).

The interval 262 to 329 is binding to host EIF4G; it reads VMNQLLIKRA…AVLVTVELEC (68 aa). One can recognise an RRM domain in the interval 332–450; that stretch reads RFFSDITTLR…SLWTGFDERT (119 aa). A phosphotyrosine; by host mark is found at Y349 and Y665. Residues 715-760 form a disordered region; it reads GGRILGESGRGRGRGLGRMGGGGGGQPRRGSRGGGGRFQGRSDRRQ. The segment covering 728 to 752 has biased composition (gly residues); sequence RGLGRMGGGGGGQPRRGSRGGGGRF.

The protein belongs to the adenoviridae shutoff protein family. In terms of assembly, monomer. Interacts with hexon protein; this interaction allows chaperoning and trimerization of hexon proteins. Interacts (via N-terminus) with host initiation factor EIF4G (via C-terminus). Interacts (via RRM domain) with viral mRNAs that contain the tripartite leader; this interaction allows ribosome shunting and expression of viral late mRNAs. Post-translationally, might be cleaved by the viral protease. Phosphorylated. Tyrosine phosphorylation enhances preferential binding to tripartite leader mRNAs and allows ribosome shunting. In terms of processing, methylated. Asymmetric dimethylation by host PRMT1 of the Arg/Gly-rich region may regulate shutoff protein binding to hexon and promote the capsid assembly in the nucleus.

Its subcellular location is the host cytoplasm. Protein that inhibits host translation while promoting late viral translation by ribosome shunting. Blocks host cap-dependent translation by binding to eIF4G, displacing MKNK1 from cap initiation complexes and preventing EIF4E phosphorylation. Binds to the tripartite leader sequence of viral late mRNAs and recruits host eIF4G, PABPC1/poly-A binding protein and 40S ribosomes subunits on viral mRNAs, allowing ribosome shunting and efficient translation of late viral mRNAs even though conventional translation via ribosome scanning from the cap has been shut off in the host cell. During assembly, acts as a chaperone protein that helps hexon proteins assembly into trimers. The sequence is that of Shutoff protein from Human adenovirus A serotype 12 (HAdV-12).